The sequence spans 71 residues: ATP synthase subunit c (71 aa).

Transmembrane regions (helical) follow at residues 5–25 (AIGIAAGLAAIGGAIGVAIIV) and 47–67 (FIGAPLAEAVPIIAIVIAFLL).

It belongs to the ATPase C chain family. As to quaternary structure, F-type ATPases have 2 components, F(1) - the catalytic core - and F(0) - the membrane proton channel. F(1) has five subunits: alpha(3), beta(3), gamma(1), delta(1), epsilon(1). F(0) has three main subunits: a(1), b(2) and c(10-14). The alpha and beta chains form an alternating ring which encloses part of the gamma chain. F(1) is attached to F(0) by a central stalk formed by the gamma and epsilon chains, while a peripheral stalk is formed by the delta and b chains.

The protein localises to the cell membrane. F(1)F(0) ATP synthase produces ATP from ADP in the presence of a proton or sodium gradient. F-type ATPases consist of two structural domains, F(1) containing the extramembraneous catalytic core and F(0) containing the membrane proton channel, linked together by a central stalk and a peripheral stalk. During catalysis, ATP synthesis in the catalytic domain of F(1) is coupled via a rotary mechanism of the central stalk subunits to proton translocation. In terms of biological role, key component of the F(0) channel; it plays a direct role in translocation across the membrane. A homomeric c-ring of between 10-14 subunits forms the central stalk rotor element with the F(1) delta and epsilon subunits. In Shouchella clausii (strain KSM-K16) (Alkalihalobacillus clausii), this protein is ATP synthase subunit c.